The chain runs to 205 residues: Troponin I, cardiac muscle (205 aa).

The interval 1 to 38 (MADQSGNAAPPPVRRRSSANYRAYATEPHAKKKSKISA) is disordered. An N-acetylalanine modification is found at A2. The residue at position 5 (S5) is a Phosphoserine. S17 and S18 each carry phosphoserine; by PKA and PKD/PRKD1. Y21 is subject to Phosphotyrosine. T26 is subject to Phosphothreonine; by STK4/MST1. The involved in binding TNC stretch occupies residues 27–74 (EPHAKKKSKISASRKLQLKTLMLQIAKQELEREAVERRGEKGRALSTR). 2 positions are modified to phosphoserine; by PKC/PRKCE: S37 and S39. Residue T46 is modified to Phosphothreonine; by STK4/MST1. The residue at position 72 (S72) is a Phosphoserine. T73 carries the post-translational modification Phosphothreonine. An involved in binding TNC and actin region spans residues 124–145 (NQKIFDLRGKFKRPTLRRVRIS). Position 138 is a phosphothreonine; by STK4/MST1 (T138). S145 is modified (phosphoserine; by PAK3). T176 bears the Phosphothreonine mark. The residue at position 194 (S194) is a Phosphoserine.

This sequence belongs to the troponin I family. As to quaternary structure, binds to actin and tropomyosin. Interacts with TRIM63. Interacts with STK4/MST1. Phosphorylated at Ser-17 and Ser-18 by PRKD1; phosphorylation reduces myofilament calcium sensitivity. Phosphorylated preferentially at Thr-26. Phosphorylation by STK4/MST1 alters its binding affinity to TNNC1 (cardiac Tn-C) and TNNT2 (cardiac Tn-T). Phosphorylated at Ser-37 and Ser-39 by PRKCE; phosphorylation increases myocardium contractile dysfunction.

Troponin I is the inhibitory subunit of troponin, the thin filament regulatory complex which confers calcium-sensitivity to striated muscle actomyosin ATPase activity. The chain is Troponin I, cardiac muscle (TNNI3) from Equus caballus (Horse).